The chain runs to 476 residues: Dermokine (476 aa).

The N-terminal stretch at 1–21 (MKFQGPLACLLLALCLGSGEA) is a signal peptide. Gly residues-rich tracts occupy residues 153–169 (SQGG…GGLG), 193–202 (WGQGGNGGPP), 236–259 (GSGG…GSGS), and 268–298 (SSGG…GSRG). The tract at residues 153-351 (SQGGLGGQGQ…ESGIQNSETS (199 aa)) is disordered. Residues 299 to 315 (DSGSESSWGSSTGSSSG) are compositionally biased toward low complexity. Positions 316–326 (NHGGSGGGNGH) are enriched in gly residues.

This sequence belongs to the dermokine family. In terms of assembly, homooligomer. Seems to be able to homodimerize and homotrimerize. O-glycosylated. Expressed in epidermis; in the spinous and granular layers and in placenta. Also found in the epithelia of the small intestine, macrophages of the lung and endothelial cells of the lung. Isoform 15 is expressed in epidermis and placenta. Isoform 1 is expressed in epidermis.

It is found in the secreted. In terms of biological role, may act as a soluble regulator of keratinocyte differentiation. This chain is Dermokine (DMKN), found in Homo sapiens (Human).